A 509-amino-acid polypeptide reads, in one-letter code: MQSWSRVYCSLAKRGHFNRISHGLQGLSAVPLRTYADQPIDADVTVIGSGPGGYVAAIKAAQLGFKTVCIEKNETLGGTCLNVGCIPSKALLNNSHYYHMAHGKDFASRGIEMSEVRLNLDKMMEQKSTAVKALTGGIAHLFKQNKVVHVNGYGKITGKNQVTATKADGGTQVIDTKNILIATGSEVTPFPGITIDEDTIVSSTGALSLKKVPEKMVVIGAGVIGVELGSVWQRLGADVTAVEFLGHVGGVGIDMEISKNFQRILQKQGFKFKLNTKVTGATKKSDGKIDVSIEAASGGKAEVITCDVLLVCIGRRPFTKNLGLEELGIELDPRGRIPVNTRFQTKIPNIYAIGDVVAGPMLAHKAEDEGIICVEGMAGGAVHIDYNCVPSVIYTHPEVAWVGKSEEQLKEEGIEYKVGKFPFAANSRAKTNADTDGMVKILGQKSTDRVLGAHILGPGAGEMVNEAALALEYGASCEDIARVCHAHPTLSEAFREANLAASFGKSINF.

The N-terminal 35 residues, 1–35 (MQSWSRVYCSLAKRGHFNRISHGLQGLSAVPLRTY), are a transit peptide targeting the mitochondrion. Residue Lys66 is modified to N6-acetyllysine; alternate. At Lys66 the chain carries N6-succinyllysine; alternate. FAD contacts are provided by residues 71 to 80 (EKNETLGGTC) and Lys89. Residues Cys80 and Cys85 are joined by a disulfide bond. 4 positions are modified to N6-acetyllysine; alternate: Lys104, Lys122, Lys132, and Lys143. Residues Lys104, Lys122, Lys132, and Lys143 each carry the N6-succinyllysine; alternate modification. FAD is bound at residue Gly154. N6-succinyllysine is present on residues Lys159 and Lys166. An FAD-binding site is contributed by 183-185 (TGS). NAD(+)-binding positions include 220–227 (GAGVIGVE) and Glu243. 2 positions are modified to N6-succinyllysine: Lys273 and Lys277. Residue Val278 participates in NAD(+) binding. Ser285 and Ser297 each carry phosphoserine. NAD(+) is bound at residue Gly314. Lys346 carries the post-translational modification N6-acetyllysine. FAD contacts are provided by residues Asp355 and 361-364 (MLAH). Residue Lys410 is modified to N6-acetyllysine; alternate. Residue Lys410 is modified to N6-succinyllysine; alternate. N6-acetyllysine is present on residues Lys417 and Lys420. N6-succinyllysine is present on Lys430. The Proton acceptor role is filled by His487. Residue Ser502 is modified to Phosphoserine. An N6-acetyllysine; alternate modification is found at Lys505. An N6-succinyllysine; alternate modification is found at Lys505.

The protein belongs to the class-I pyridine nucleotide-disulfide oxidoreductase family. As to quaternary structure, homodimer. Part of the multimeric pyruvate dehydrogenase complex that contains multiple copies of pyruvate dehydrogenase (subunits PDHA (PDHA1 or PDHA2) and PDHB, E1), dihydrolipoamide acetyltransferase (DLAT, E2) and lipoamide dehydrogenase (DLD, E3). These subunits are bound to an inner core composed of about 48 DLAT and 12 PDHX molecules (by non covalent bonds). The 2-oxoglutarate dehydrogenase complex is composed of OGDH (2-oxoglutarate dehydrogenase; E1), DLST (dihydrolipoamide succinyltransferase; E2), DLD (dihydrolipoamide dehydrogenase; E3) and the assembly factor KGD4. It contains multiple copies of the three enzymatic components (E1, E2 and E3). In the nucleus, the 2-oxoglutarate dehydrogenase complex associates with KAT2A. Interacts with PDHX. The cofactor is FAD. In terms of processing, tyrosine phosphorylated.

The protein resides in the mitochondrion matrix. Its subcellular location is the nucleus. It localises to the cell projection. The protein localises to the cilium. It is found in the flagellum. The protein resides in the cytoplasmic vesicle. Its subcellular location is the secretory vesicle. It localises to the acrosome. The catalysed reaction is N(6)-[(R)-dihydrolipoyl]-L-lysyl-[protein] + NAD(+) = N(6)-[(R)-lipoyl]-L-lysyl-[protein] + NADH + H(+). Disruption of native heterodimer state inhibits primary dihydrolipoamide dehydrogenase activity and induces serine protease activity. Lipoamide dehydrogenase is a component of the glycine cleavage system as well as an E3 component of three alpha-ketoacid dehydrogenase complexes (pyruvate-, alpha-ketoglutarate-, and branched-chain amino acid-dehydrogenase complex). The 2-oxoglutarate dehydrogenase complex is mainly active in the mitochondrion. A fraction of the 2-oxoglutarate dehydrogenase complex also localizes in the nucleus and is required for lysine succinylation of histones: associates with KAT2A on chromatin and provides succinyl-CoA to histone succinyltransferase KAT2A. In monomeric form may have additional moonlighting function as serine protease. Involved in the hyperactivation of spermatazoa during capacitation and in the spermatazoal acrosome reaction. The protein is Dihydrolipoyl dehydrogenase, mitochondrial (DLD) of Homo sapiens (Human).